We begin with the raw amino-acid sequence, 462 residues long: Glutamate--tRNA ligase (462 aa).

The 'HIGH' region signature appears at 11–21 (PSPTGFIHLGN). Positions 243 to 247 (KMSKR) match the 'KMSKS' region motif. Lys246 lines the ATP pocket.

Belongs to the class-I aminoacyl-tRNA synthetase family. Glutamate--tRNA ligase type 1 subfamily. Monomer.

The protein resides in the cytoplasm. It catalyses the reaction tRNA(Glu) + L-glutamate + ATP = L-glutamyl-tRNA(Glu) + AMP + diphosphate. Functionally, catalyzes the attachment of glutamate to tRNA(Glu) in a two-step reaction: glutamate is first activated by ATP to form Glu-AMP and then transferred to the acceptor end of tRNA(Glu). This Albidiferax ferrireducens (strain ATCC BAA-621 / DSM 15236 / T118) (Rhodoferax ferrireducens) protein is Glutamate--tRNA ligase.